The following is a 165-amino-acid chain: Transcriptional repressor NrdR (165 aa).

A zinc finger spans residues 3–34; that stretch reads CPFCGAQDTRVVDSRLSHEGDQVRRRRECGEC. The region spanning 49–139 is the ATP-cone domain; sequence PRVVKSDGSR…VYRRFEDVNQ (91 aa).

This sequence belongs to the NrdR family. It depends on Zn(2+) as a cofactor.

In terms of biological role, negatively regulates transcription of bacterial ribonucleotide reductase nrd genes and operons by binding to NrdR-boxes. This Methylococcus capsulatus (strain ATCC 33009 / NCIMB 11132 / Bath) protein is Transcriptional repressor NrdR.